The chain runs to 371 residues: UPF0284 protein tll2306 (371 aa).

The protein belongs to the UPF0284 family.

In Thermosynechococcus vestitus (strain NIES-2133 / IAM M-273 / BP-1), this protein is UPF0284 protein tll2306.